The primary structure comprises 234 residues: Inner membrane protein YbhL (234 aa).

Topologically, residues 1-23 are periplasmic; it reads MDRFPRSDSIVQPRAGLQTYMAQ. A helical membrane pass occupies residues 24-44; sequence VYGWMTVGLLLTAFVAWYAAN. The Cytoplasmic portion of the chain corresponds to 45-56; that stretch reads SAAVMELLFTNR. The chain crosses the membrane as a helical span at residues 57–77; the sequence is VFLIGLIIAQLALVIVLSAMI. Residues 78–79 are Periplasmic-facing; that stretch reads QK. A helical transmembrane segment spans residues 80–100; the sequence is LSAGVTTMLFMLYSALTGLTL. At 101-102 the chain is on the cytoplasmic side; the sequence is SS. Residues 103–123 form a helical membrane-spanning segment; sequence IFIVYTAASIASTFVVTAGMF. Topologically, residues 124 to 136 are periplasmic; it reads GAMSLYGYTTKRD. The helical transmembrane segment at 137-157 threads the bilayer; the sequence is LSGFGNMLFMALIGIVLASLV. At 158-163 the chain is on the cytoplasmic side; the sequence is NFWLKS. A helical membrane pass occupies residues 164–184; the sequence is EALMWAVTYIGVIVFVGLTAY. Over 185–206 the chain is Periplasmic; the sequence is DTQKLKNMGEQIDTRDTSNLRK. Residues 207–227 traverse the membrane as a helical segment; it reads YSILGALTLYLDFINLFLMLL. Residues 228–234 are Cytoplasmic-facing; that stretch reads RIFGNRR.

Belongs to the BI1 family.

The protein resides in the cell inner membrane. This is Inner membrane protein YbhL (ybhL) from Escherichia coli (strain K12).